A 374-amino-acid polypeptide reads, in one-letter code: Glutamate 5-kinase (374 aa).

Residue Lys9 coordinates ATP. Residues Ser49, Asp136, and Asn148 each coordinate substrate. Residues Thr168 to Asp169 and Thr210 to Lys216 each bind ATP. A PUA domain is found at Ser276–His354.

The protein belongs to the glutamate 5-kinase family.

It localises to the cytoplasm. It catalyses the reaction L-glutamate + ATP = L-glutamyl 5-phosphate + ADP. The protein operates within amino-acid biosynthesis; L-proline biosynthesis; L-glutamate 5-semialdehyde from L-glutamate: step 1/2. Catalyzes the transfer of a phosphate group to glutamate to form L-glutamate 5-phosphate. The chain is Glutamate 5-kinase from Geobacillus thermodenitrificans (strain NG80-2).